Here is a 269-residue protein sequence, read N- to C-terminus: Aminoglycoside (3'') (9) adenylyltransferase (269 aa).

The catalysed reaction is streptomycin + ATP = 3''-O-adenylylstreptomycin + diphosphate. It carries out the reaction spectinomycin + ATP = 9-O-adenylylspectinomycin + diphosphate. Functionally, mediates bacterial resistance to the antibiotic spectinomycin and probably also to streptomycin. This chain is Aminoglycoside (3'') (9) adenylyltransferase, found in Rhizobium radiobacter (Agrobacterium tumefaciens).